Reading from the N-terminus, the 269-residue chain is 4-hydroxy-tetrahydrodipicolinate reductase (269 aa).

NAD(+) contacts are provided by residues Gly-10–Met-15, Glu-36, Gly-99–Thr-101, and Ala-123–Phe-126. The Proton donor/acceptor role is filled by His-156. Position 157 (His-157) interacts with (S)-2,3,4,5-tetrahydrodipicolinate. The active-site Proton donor is the Lys-160. Gly-166–Thr-167 contacts (S)-2,3,4,5-tetrahydrodipicolinate.

Belongs to the DapB family.

It is found in the cytoplasm. The enzyme catalyses (S)-2,3,4,5-tetrahydrodipicolinate + NAD(+) + H2O = (2S,4S)-4-hydroxy-2,3,4,5-tetrahydrodipicolinate + NADH + H(+). It carries out the reaction (S)-2,3,4,5-tetrahydrodipicolinate + NADP(+) + H2O = (2S,4S)-4-hydroxy-2,3,4,5-tetrahydrodipicolinate + NADPH + H(+). It functions in the pathway amino-acid biosynthesis; L-lysine biosynthesis via DAP pathway; (S)-tetrahydrodipicolinate from L-aspartate: step 4/4. Functionally, catalyzes the conversion of 4-hydroxy-tetrahydrodipicolinate (HTPA) to tetrahydrodipicolinate. This Neisseria meningitidis serogroup A / serotype 4A (strain DSM 15465 / Z2491) protein is 4-hydroxy-tetrahydrodipicolinate reductase.